The primary structure comprises 334 residues: Galactinol synthase 3 (334 aa).

The active site involves Lys-97. Residues Asp-113, Asp-115, and His-251 each contribute to the Mn(2+) site.

Belongs to the glycosyltransferase 8 family. Galactosyltransferase subfamily. A divalent metal cation is required as a cofactor.

Its subcellular location is the cytoplasm. It catalyses the reaction myo-inositol + UDP-alpha-D-galactose = alpha-D-galactosyl-(1-&gt;3)-1D-myo-inositol + UDP + H(+). Functionally, galactinol synthase involved in the biosynthesis of raffinose family oligosaccharides (RFOs) that function as osmoprotectants. May promote plant stress tolerance. This is Galactinol synthase 3 (GOLS3) from Arabidopsis thaliana (Mouse-ear cress).